The following is a 173-amino-acid chain: Crossover junction endodeoxyribonuclease RuvC (173 aa).

Catalysis depends on residues D8, E67, and D139. Positions 8, 67, and 139 each coordinate Mg(2+).

The protein belongs to the RuvC family. As to quaternary structure, homodimer which binds Holliday junction (HJ) DNA. The HJ becomes 2-fold symmetrical on binding to RuvC with unstacked arms; it has a different conformation from HJ DNA in complex with RuvA. In the full resolvosome a probable DNA-RuvA(4)-RuvB(12)-RuvC(2) complex forms which resolves the HJ. It depends on Mg(2+) as a cofactor.

It is found in the cytoplasm. The enzyme catalyses Endonucleolytic cleavage at a junction such as a reciprocal single-stranded crossover between two homologous DNA duplexes (Holliday junction).. Its function is as follows. The RuvA-RuvB-RuvC complex processes Holliday junction (HJ) DNA during genetic recombination and DNA repair. Endonuclease that resolves HJ intermediates. Cleaves cruciform DNA by making single-stranded nicks across the HJ at symmetrical positions within the homologous arms, yielding a 5'-phosphate and a 3'-hydroxyl group; requires a central core of homology in the junction. The consensus cleavage sequence is 5'-(A/T)TT(C/G)-3'. Cleavage occurs on the 3'-side of the TT dinucleotide at the point of strand exchange. HJ branch migration catalyzed by RuvA-RuvB allows RuvC to scan DNA until it finds its consensus sequence, where it cleaves and resolves the cruciform DNA. In Aliivibrio salmonicida (strain LFI1238) (Vibrio salmonicida (strain LFI1238)), this protein is Crossover junction endodeoxyribonuclease RuvC.